The sequence spans 236 residues: Putative glutamine amidotransferase-like protein YvdE (236 aa).

A Glutamine amidotransferase type-1 domain is found at 17-236 (SPFWWNKVSY…IFEIFANGTI (220 aa)).

In Lactococcus lactis subsp. lactis (strain IL1403) (Streptococcus lactis), this protein is Putative glutamine amidotransferase-like protein YvdE (yvdE).